Consider the following 252-residue polypeptide: Triosephosphate isomerase (252 aa).

A substrate-binding site is contributed by 11–13 (NWK). The active-site Electrophile is the His97. Catalysis depends on Glu169, which acts as the Proton acceptor. Substrate-binding positions include Gly175, Ser215, and 236-237 (GG).

This sequence belongs to the triosephosphate isomerase family. Homodimer.

The protein localises to the cytoplasm. It catalyses the reaction D-glyceraldehyde 3-phosphate = dihydroxyacetone phosphate. The protein operates within carbohydrate biosynthesis; gluconeogenesis. It participates in carbohydrate degradation; glycolysis; D-glyceraldehyde 3-phosphate from glycerone phosphate: step 1/1. In terms of biological role, involved in the gluconeogenesis. Catalyzes stereospecifically the conversion of dihydroxyacetone phosphate (DHAP) to D-glyceraldehyde-3-phosphate (G3P). The polypeptide is Triosephosphate isomerase (Mycoplasmoides gallisepticum (strain R(low / passage 15 / clone 2)) (Mycoplasma gallisepticum)).